A 173-amino-acid chain; its full sequence is Shikimate kinase (173 aa).

11–16 (GTGKTS) provides a ligand contact to ATP. Thr-15 provides a ligand contact to Mg(2+). Residues Asp-33, Arg-57, and Gly-79 each contribute to the substrate site. Residue Arg-117 coordinates ATP. Arg-136 serves as a coordination point for substrate.

The protein belongs to the shikimate kinase family. As to quaternary structure, monomer. The cofactor is Mg(2+).

The protein localises to the cytoplasm. It catalyses the reaction shikimate + ATP = 3-phosphoshikimate + ADP + H(+). It participates in metabolic intermediate biosynthesis; chorismate biosynthesis; chorismate from D-erythrose 4-phosphate and phosphoenolpyruvate: step 5/7. Functionally, catalyzes the specific phosphorylation of the 3-hydroxyl group of shikimic acid using ATP as a cosubstrate. The chain is Shikimate kinase from Thermodesulfovibrio yellowstonii (strain ATCC 51303 / DSM 11347 / YP87).